A 251-amino-acid chain; its full sequence is CDP-diacylglycerol pyrophosphatase (251 aa).

A helical membrane pass occupies residues 4 to 24 (AGLLFLVMIVIAVVASGIGYW).

It belongs to the Cdh family.

It is found in the cell inner membrane. The catalysed reaction is a CDP-1,2-diacyl-sn-glycerol + H2O = a 1,2-diacyl-sn-glycero-3-phosphate + CMP + 2 H(+). It functions in the pathway phospholipid metabolism; CDP-diacylglycerol degradation; phosphatidate from CDP-diacylglycerol: step 1/1. The chain is CDP-diacylglycerol pyrophosphatase from Escherichia coli O8 (strain IAI1).